Consider the following 602-residue polypeptide: UvrABC system protein C (602 aa).

Residues Asp15–Ile92 form the GIY-YIG domain. Positions Gly197–Thr232 constitute a UVR domain.

The protein belongs to the UvrC family. In terms of assembly, interacts with UvrB in an incision complex.

Its subcellular location is the cytoplasm. Functionally, the UvrABC repair system catalyzes the recognition and processing of DNA lesions. UvrC both incises the 5' and 3' sides of the lesion. The N-terminal half is responsible for the 3' incision and the C-terminal half is responsible for the 5' incision. The sequence is that of UvrABC system protein C from Lacticaseibacillus casei (strain BL23) (Lactobacillus casei).